The sequence spans 162 residues: Ribosome maturation factor RimP (162 aa).

It belongs to the RimP family.

The protein resides in the cytoplasm. Functionally, required for maturation of 30S ribosomal subunits. In Cupriavidus metallidurans (strain ATCC 43123 / DSM 2839 / NBRC 102507 / CH34) (Ralstonia metallidurans), this protein is Ribosome maturation factor RimP.